The primary structure comprises 205 residues: IQ domain-containing protein F1 (205 aa).

Composition is skewed to basic and acidic residues over residues methionine 1 to proline 24 and alanine 51 to lysine 68. Residues methionine 1 to lysine 68 form a disordered region. 2 consecutive IQ domains span residues lysine 68–isoleucine 97 and lysine 124–isoleucine 153.

Interacts with calmodulin.

The protein localises to the cytoplasmic vesicle. It localises to the secretory vesicle. Its subcellular location is the acrosome. Its function is as follows. Involved in sperm capacitation and acrosome reaction. The sequence is that of IQ domain-containing protein F1 from Homo sapiens (Human).